Consider the following 254-residue polypeptide: Phosphatidylglycerol--prolipoprotein diacylglyceryl transferase (254 aa).

Helical transmembrane passes span 11 to 31 (LAIRWYGVIISIGAALGLLLA), 49 to 69 (FLIAFPSAIIGARLYYVIFEF), and 84 to 104 (QGGLAIHGGIIFGVLAVYIYL). Arg130 contributes to the a 1,2-diacyl-sn-glycero-3-phospho-(1'-sn-glycerol) binding site. A run of 3 helical transmembrane segments spans residues 169 to 189 (PTFLYESIWNFIVCIFLVYLL), 196 to 216 (GIVFMAYIGLYSLGRFFIEGL), and 228 to 248 (VAQLISVLGIILSIFFIYNII).

The protein belongs to the Lgt family.

Its subcellular location is the cell membrane. It catalyses the reaction L-cysteinyl-[prolipoprotein] + a 1,2-diacyl-sn-glycero-3-phospho-(1'-sn-glycerol) = an S-1,2-diacyl-sn-glyceryl-L-cysteinyl-[prolipoprotein] + sn-glycerol 1-phosphate + H(+). Its pathway is protein modification; lipoprotein biosynthesis (diacylglyceryl transfer). Its function is as follows. Catalyzes the transfer of the diacylglyceryl group from phosphatidylglycerol to the sulfhydryl group of the N-terminal cysteine of a prolipoprotein, the first step in the formation of mature lipoproteins. The chain is Phosphatidylglycerol--prolipoprotein diacylglyceryl transferase from Clostridium botulinum (strain Loch Maree / Type A3).